The chain runs to 416 residues: Serine hydroxymethyltransferase (416 aa).

(6S)-5,6,7,8-tetrahydrofolate contacts are provided by residues leucine 117 and 121–123 (GHL). Lysine 225 is modified (N6-(pyridoxal phosphate)lysine). Position 351–353 (351–353 (SPF)) interacts with (6S)-5,6,7,8-tetrahydrofolate.

This sequence belongs to the SHMT family. As to quaternary structure, homodimer. Pyridoxal 5'-phosphate serves as cofactor.

The protein localises to the cytoplasm. It catalyses the reaction (6R)-5,10-methylene-5,6,7,8-tetrahydrofolate + glycine + H2O = (6S)-5,6,7,8-tetrahydrofolate + L-serine. It participates in one-carbon metabolism; tetrahydrofolate interconversion. It functions in the pathway amino-acid biosynthesis; glycine biosynthesis; glycine from L-serine: step 1/1. Functionally, catalyzes the reversible interconversion of serine and glycine with tetrahydrofolate (THF) serving as the one-carbon carrier. This reaction serves as the major source of one-carbon groups required for the biosynthesis of purines, thymidylate, methionine, and other important biomolecules. Also exhibits THF-independent aldolase activity toward beta-hydroxyamino acids, producing glycine and aldehydes, via a retro-aldol mechanism. This chain is Serine hydroxymethyltransferase, found in Blochmanniella pennsylvanica (strain BPEN).